A 325-amino-acid chain; its full sequence is Acetyl-coenzyme A carboxylase carboxyl transferase subunit alpha (325 aa).

The CoA carboxyltransferase C-terminal domain maps to arginine 38–threonine 292.

This sequence belongs to the AccA family. In terms of assembly, acetyl-CoA carboxylase is a heterohexamer composed of biotin carboxyl carrier protein (AccB), biotin carboxylase (AccC) and two subunits each of ACCase subunit alpha (AccA) and ACCase subunit beta (AccD).

Its subcellular location is the cytoplasm. It carries out the reaction N(6)-carboxybiotinyl-L-lysyl-[protein] + acetyl-CoA = N(6)-biotinyl-L-lysyl-[protein] + malonyl-CoA. It participates in lipid metabolism; malonyl-CoA biosynthesis; malonyl-CoA from acetyl-CoA: step 1/1. Its activity is regulated as follows. Inhibited by pyrrolidine dione antibiotics moiramide B (CPD1) and CPD2. In terms of biological role, component of the acetyl coenzyme A carboxylase (ACC) complex. First, biotin carboxylase catalyzes the carboxylation of biotin on its carrier protein (BCCP) and then the CO(2) group is transferred by the carboxyltransferase to acetyl-CoA to form malonyl-CoA. The polypeptide is Acetyl-coenzyme A carboxylase carboxyl transferase subunit alpha (Bacillus subtilis (strain 168)).